The primary structure comprises 280 residues: Probable aquaporin PIP2-8 (280 aa).

The segment at 1-21 (MAAGSGSGSNPKDYQDPPPAP) is disordered. Transmembrane regions (helical) follow at residues 36–56 (AAIAEFTATLLLVCISVSTVI) and 70–92 (LGIAWAFGGLIFVLVYCTAGISG). An NPA 1 motif is present at residues 96 to 98 (NPA). Transmembrane regions (helical) follow at residues 113 to 135 (RAALYTMAQCVGAVCGAGLARAM), 156 to 176 (SAGAGVVAEMVGTFVLVYTVF), and 192 to 212 (VLAPLPIGLAVLVVHLATIPI). An NPA 2 motif is present at residues 218–220 (NPA). The helical transmembrane segment at 236 to 256 (AWSHLWIFWVGPFAGAAAAMI) threads the bilayer.

Belongs to the MIP/aquaporin (TC 1.A.8) family. PIP (TC 1.A.8.11) subfamily. Expressed in leaves and at lower levels in roots.

The protein resides in the cell membrane. Aquaporins facilitate the transport of water and small neutral solutes across cell membranes. The chain is Probable aquaporin PIP2-8 (PIP2-8) from Oryza sativa subsp. japonica (Rice).